The chain runs to 549 residues: Cytoplasmic trehalase (549 aa).

Substrate is bound by residues R168, 175–176 (WD), N212, 221–223 (RSQ), 292–294 (RDE), and G324. Active-site proton donor/acceptor residues include D326 and E509. Position 525 (E525) interacts with substrate.

The protein belongs to the glycosyl hydrolase 37 family. As to quaternary structure, monomer.

The protein localises to the cytoplasm. It carries out the reaction alpha,alpha-trehalose + H2O = alpha-D-glucose + beta-D-glucose. Its pathway is glycan degradation; trehalose degradation; D-glucose from alpha,alpha-trehalose: step 1/1. In terms of biological role, hydrolyzes trehalose to glucose. Could be involved, in cells returning to low osmolarity conditions, in the utilization of the accumulated cytoplasmic trehalose, which was synthesized in response to high osmolarity. This chain is Cytoplasmic trehalase, found in Escherichia coli (strain 55989 / EAEC).